The following is a 476-amino-acid chain: Bifunctional protein HldE (476 aa).

Positions 1–319 (MKVTLPAFEK…EALKSHQGES (319 aa)) are ribokinase. Residue 195–198 (NMSE) coordinates ATP. Residue Asp264 is part of the active site. The interval 345 to 476 (MTNGCFDILH…AIIQNIMSRH (132 aa)) is cytidylyltransferase.

This sequence in the N-terminal section; belongs to the carbohydrate kinase PfkB family. In the C-terminal section; belongs to the cytidylyltransferase family. Homodimer.

It carries out the reaction D-glycero-beta-D-manno-heptose 7-phosphate + ATP = D-glycero-beta-D-manno-heptose 1,7-bisphosphate + ADP + H(+). It catalyses the reaction D-glycero-beta-D-manno-heptose 1-phosphate + ATP + H(+) = ADP-D-glycero-beta-D-manno-heptose + diphosphate. It functions in the pathway nucleotide-sugar biosynthesis; ADP-L-glycero-beta-D-manno-heptose biosynthesis; ADP-L-glycero-beta-D-manno-heptose from D-glycero-beta-D-manno-heptose 7-phosphate: step 1/4. It participates in nucleotide-sugar biosynthesis; ADP-L-glycero-beta-D-manno-heptose biosynthesis; ADP-L-glycero-beta-D-manno-heptose from D-glycero-beta-D-manno-heptose 7-phosphate: step 3/4. In terms of biological role, catalyzes the phosphorylation of D-glycero-D-manno-heptose 7-phosphate at the C-1 position to selectively form D-glycero-beta-D-manno-heptose-1,7-bisphosphate. Its function is as follows. Catalyzes the ADP transfer from ATP to D-glycero-beta-D-manno-heptose 1-phosphate, yielding ADP-D-glycero-beta-D-manno-heptose. In Shewanella amazonensis (strain ATCC BAA-1098 / SB2B), this protein is Bifunctional protein HldE.